Consider the following 81-residue polypeptide: Cytochrome b559 subunit alpha (81 aa).

The chain crosses the membrane as a helical span at residues 21–35 (VIHALTIPALFLAGW). His-23 is a heme binding site.

This sequence belongs to the PsbE/PsbF family. In terms of assembly, heterodimer of an alpha subunit and a beta subunit. PSII is composed of 1 copy each of membrane proteins PsbA, PsbB, PsbC, PsbD, PsbE, PsbF, PsbH, PsbI, PsbJ, PsbK, PsbL, PsbM, PsbT, PsbX, PsbY, PsbZ, Psb30/Ycf12, peripheral proteins PsbO, CyanoQ (PsbQ), PsbU, PsbV and a large number of cofactors. It forms dimeric complexes. It depends on heme b as a cofactor.

The protein localises to the cellular thylakoid membrane. Its function is as follows. This b-type cytochrome is tightly associated with the reaction center of photosystem II (PSII). PSII is a light-driven water:plastoquinone oxidoreductase that uses light energy to abstract electrons from H(2)O, generating O(2) and a proton gradient subsequently used for ATP formation. It consists of a core antenna complex that captures photons, and an electron transfer chain that converts photonic excitation into a charge separation. This chain is Cytochrome b559 subunit alpha, found in Synechococcus sp. (strain JA-3-3Ab) (Cyanobacteria bacterium Yellowstone A-Prime).